Here is a 69-residue protein sequence, read N- to C-terminus: Beta-defensin 122 (69 aa).

The signal sequence occupies residues 1 to 19; that stretch reads MKPFLVTLAVLLLFFQVTA. Intrachain disulfides connect Cys26–Cys53, Cys33–Cys47, and Cys37–Cys54.

The protein belongs to the beta-defensin family.

The protein resides in the secreted. In terms of biological role, has antibacterial activity. This chain is Beta-defensin 122 (DEFB122), found in Macaca mulatta (Rhesus macaque).